A 486-amino-acid polypeptide reads, in one-letter code: Shugoshin-1 (486 aa).

Residues 71 to 154 (IEVSRVELQK…QNRAKILEKK (84 aa)) adopt a coiled-coil conformation. Disordered regions lie at residues 137–163 (MSKTSNNQQNRAKILEKKTRSSKCAPT), 187–209 (YTSCHEPPQDKTNKRCTNRRKSE), 222–251 (HSCRPHVEYNGSSHDDDPRKTRRRRSARLN), 323–346 (AGSSVAGGEAHKFDIEDPEPPRKS), 382–403 (PIQHEQKRKLSRRKSSRLDPGP), and 418–467 (TVAP…SRRA). Basic and acidic residues predominate over residues 331–346 (EAHKFDIEDPEPPRKS). Positions 387-396 (QKRKLSRRKS) are enriched in basic residues. Positions 423-433 (APSSSNALIEQ) are enriched in polar residues.

This sequence belongs to the shugoshin family. As to expression, highly expressed in roots. Expressed in panicles. Expressed at low levels in leaves.

It localises to the nucleus. The protein resides in the nucleolus. Its subcellular location is the chromosome. The protein localises to the centromere. In terms of biological role, plays a central role in chromosome cohesion during meiosis I by preventing premature dissociation of cohesin complex from centromeres after prophase, when most of cohesin complex dissociates from chromosomes arms. Required for the timely assembly and maintenance of synaptonemal complex (SC) during early prophase I. Required for maintenance of centromeric cohesion before prophase II and correct segregation of chromatids during meiosis II. Has apparently no function in mitosis. The polypeptide is Shugoshin-1 (Oryza sativa subsp. japonica (Rice)).